Consider the following 490-residue polypeptide: Cobyric acid synthase (490 aa).

Residues 252–428 enclose the GATase cobBQ-type domain; that stretch reads ARRVAVVRLP…WHGAFEGDAL (177 aa). Catalysis depends on cysteine 333, which acts as the Nucleophile. Histidine 420 is an active-site residue.

Belongs to the CobB/CobQ family. CobQ subfamily.

It participates in cofactor biosynthesis; adenosylcobalamin biosynthesis. Catalyzes amidations at positions B, D, E, and G on adenosylcobyrinic A,C-diamide. NH(2) groups are provided by glutamine, and one molecule of ATP is hydrogenolyzed for each amidation. This is Cobyric acid synthase from Mycolicibacterium vanbaalenii (strain DSM 7251 / JCM 13017 / BCRC 16820 / KCTC 9966 / NRRL B-24157 / PYR-1) (Mycobacterium vanbaalenii).